The sequence spans 673 residues: UvrABC system protein B (673 aa).

One can recognise a Helicase ATP-binding domain in the interval 28–414 (ASILQNKRSQ…EAGGEIVEQL (387 aa)). 41–48 (GITGSGKT) is an ATP binding site. A Beta-hairpin motif is present at residues 94-117 (YYDYYQPEAYVPRTDTYIEKDMSI). The Helicase C-terminal domain occupies 433–595 (QVDDCLAEIR…ITPRTVKREI (163 aa)). Residues 633 to 668 (RLKIKECEKEMKKAAKEFRFEEAADWRDQMRRYQQI) enclose the UVR domain.

It belongs to the UvrB family. In terms of assembly, forms a heterotetramer with UvrA during the search for lesions. Interacts with UvrC in an incision complex.

Its subcellular location is the cytoplasm. Functionally, the UvrABC repair system catalyzes the recognition and processing of DNA lesions. A damage recognition complex composed of 2 UvrA and 2 UvrB subunits scans DNA for abnormalities. Upon binding of the UvrA(2)B(2) complex to a putative damaged site, the DNA wraps around one UvrB monomer. DNA wrap is dependent on ATP binding by UvrB and probably causes local melting of the DNA helix, facilitating insertion of UvrB beta-hairpin between the DNA strands. Then UvrB probes one DNA strand for the presence of a lesion. If a lesion is found the UvrA subunits dissociate and the UvrB-DNA preincision complex is formed. This complex is subsequently bound by UvrC and the second UvrB is released. If no lesion is found, the DNA wraps around the other UvrB subunit that will check the other stand for damage. This Protochlamydia amoebophila (strain UWE25) protein is UvrABC system protein B.